A 174-amino-acid chain; its full sequence is Scytalone dehydratase-like protein Arp1 (174 aa).

Tyrosine 49 provides a ligand contact to substrate. Active-site residues include histidine 84 and histidine 109. Asparagine 130 lines the substrate pocket.

The protein belongs to the scytalone dehydratase family. As to quaternary structure, homotrimer. Each subunit contains an active site, located in the central part of the hydrophobic core of the monomer, which functions independently.

Its function is as follows. Scytalone dehydratase-like protein; part of the Pks2 gene cluster that mediates the formation of infectious structures (appressoria), enabling these fungi to kill insects faster. The product of the Pks2 gene cluster is different from the one of Pks1 and has still not been identified. The protein is Scytalone dehydratase-like protein Arp1 of Metarhizium majus (strain ARSEF 297).